The sequence spans 301 residues: Prohibitin-2 (301 aa).

2 necessary for transcriptional repression regions span residues 19–49 (VGTALKLLLGAGALAYGVRESVFIVEGGQRA) and 150–174 (ASQLITQRAQVSLLIRRELTERAKD). The stretch at 190-237 (SREYTAAVEAKQVAQQEAQRAQFLVEKAKQEQKQKIVQAEGEATAAKM) forms a coiled coil.

It belongs to the prohibitin family. As to quaternary structure, the mitochondrial prohibitin complex consists of two subunits (PHB1 and PHB2), assembled into a membrane-associated ring-shaped supercomplex of approximately 1 mDa.

It is found in the mitochondrion inner membrane. It localises to the cytoplasm. The protein localises to the nucleus. Its subcellular location is the cell membrane. Functionally, protein with pleiotropic attributes mediated in a cell-compartment- and tissue-specific manner, which include the plasma membrane-associated cell signaling functions, mitochondrial chaperone, and transcriptional co-regulator of transcription factors and sex steroid hormones in the nucleus. In the mitochondria, together with PHB, forms large ring complexes (prohibitin complexes) in the inner mitochondrial membrane (IMM) and functions as a chaperone protein that stabilizes mitochondrial respiratory enzymes and maintains mitochondrial integrity in the IMM, which is required for mitochondrial morphogenesis, neuronal survival, and normal lifespan. Its function is as follows. In the nucleus, serves as transcriptional co-regulator. This Gallus gallus (Chicken) protein is Prohibitin-2 (PHB2).